A 942-amino-acid chain; its full sequence is Protein O-mannosyl-transferase TMTC1 (942 aa).

The Cytoplasmic portion of the chain corresponds to 1–20 (MLVTRGDRGGGERAPSRRPR). Residues 21 to 41 (CGLVPAGAAALLAGASCLCYG) traverse the membrane as a helical segment. Over 42–109 (RSLRGEFVHD…RLNIFLTGMN (68 aa)) the chain is Extracellular. A helical transmembrane segment spans residues 110–130 (PFYFHAVNVILHCLVTLVLMY). Over 131-140 (TCDKTVFKNR) the chain is Cytoplasmic. Residues 141 to 157 (GLAFVTALLFAVHPVHT) traverse the membrane as a helical segment. Over 158 to 159 (EA) the chain is Extracellular. A helical transmembrane segment spans residues 160–180 (VAGIVGRADVLACLLFLLAFL). Residues 181-196 (SYQRSLDQGCAGQCFP) are Cytoplasmic-facing. Residues 197 to 217 (TTASPFFLLLSLFLGTCAMLV) traverse the membrane as a helical segment. Over 218-331 (KETGITVFGV…LLTLRPFLKR (114 aa)) the chain is Extracellular. The disordered stretch occupies residues 245–285 (NGAVCQHSSGQPGSPQPSSQQAHPHRESRKQRFPHKDSWGG). Residues 250–266 (QHSSGQPGSPQPSSQQA) are compositionally biased toward low complexity. Residues 332–352 (AILVISYVTVILYFRLWIMGG) form a helical membrane-spanning segment. Residues 353 to 373 (TMPLFSEQDNPASFSPYILTR) lie on the Cytoplasmic side of the membrane. A helical membrane pass occupies residues 374–394 (FLTYSYLLAFNVWLLLAPITL). At 395–414 (CYDWQVGSIPLVETIWDVRN) the chain is on the extracellular side. Residues 415 to 435 (LATILLAVVMALLSLHCVAAF) traverse the membrane as a helical segment. The Cytoplasmic segment spans residues 436–441 (KRLEHK). The chain crosses the membrane as a helical span at residues 442-462 (EVLAGLLFLVFPFIPASNLFF). Residue R463 is a topological domain, extracellular. A helical membrane pass occupies residues 464–484 (VGFVVAERVLYMPSMGYCILF). The Cytoplasmic portion of the chain corresponds to 485–498 (VHGLSKLCAGLSRC). A helical transmembrane segment spans residues 499 to 519 (GATSLMASTVLLLLLFSWKTV). The Extracellular portion of the chain corresponds to 520 to 942 (KQNEIWLSRE…LQEVRERDQT (423 aa)). TPR repeat units lie at residues 543 to 576 (AKVH…YPRH), 577 to 607 (ASAL…HPQH), 608 to 641 (NRAL…GPDF), 642 to 675 (ADAY…CPDS), 676 to 709 (SDLH…SPSH), 710 to 742 (HVAV…VART), 743 to 776 (AEVL…QPSQ), 777 to 810 (RELR…EPRC), 811 to 844 (LECY…KPKD), 849 to 882 (SELF…DPDQ), and 883 to 916 (AQAW…VPDS).

It belongs to the TMTC family. In terms of assembly, may interact with FAM168B.

The protein localises to the membrane. It is found in the endoplasmic reticulum. The catalysed reaction is a di-trans,poly-cis-dolichyl beta-D-mannosyl phosphate + L-seryl-[protein] = 3-O-(alpha-D-mannosyl)-L-seryl-[protein] + a di-trans,poly-cis-dolichyl phosphate + H(+). It carries out the reaction a di-trans,poly-cis-dolichyl beta-D-mannosyl phosphate + L-threonyl-[protein] = 3-O-(alpha-D-mannosyl)-L-threonyl-[protein] + a di-trans,poly-cis-dolichyl phosphate + H(+). The protein operates within protein modification; protein glycosylation. Its function is as follows. Transfers mannosyl residues to the hydroxyl group of serine or threonine residues. The 4 members of the TMTC family are O-mannosyl-transferases dedicated primarily to the cadherin superfamily, each member seems to have a distinct role in decorating the cadherin domains with O-linked mannose glycans at specific regions. Also acts as O-mannosyl-transferase on other proteins such as PDIA3. The sequence is that of Protein O-mannosyl-transferase TMTC1 from Mus musculus (Mouse).